Reading from the N-terminus, the 264-residue chain is 3-methyl-2-oxobutanoate hydroxymethyltransferase (264 aa).

2 residues coordinate Mg(2+): Asp45 and Asp84. Residues 45–46 (DS), Asp84, and Lys112 contribute to the 3-methyl-2-oxobutanoate site. Glu114 is a binding site for Mg(2+). Catalysis depends on Glu181, which acts as the Proton acceptor.

Belongs to the PanB family. In terms of assembly, homodecamer; pentamer of dimers. It depends on Mg(2+) as a cofactor.

It localises to the cytoplasm. The enzyme catalyses 3-methyl-2-oxobutanoate + (6R)-5,10-methylene-5,6,7,8-tetrahydrofolate + H2O = 2-dehydropantoate + (6S)-5,6,7,8-tetrahydrofolate. Its pathway is cofactor biosynthesis; (R)-pantothenate biosynthesis; (R)-pantoate from 3-methyl-2-oxobutanoate: step 1/2. Its function is as follows. Catalyzes the reversible reaction in which hydroxymethyl group from 5,10-methylenetetrahydrofolate is transferred onto alpha-ketoisovalerate to form ketopantoate. This Colwellia psychrerythraea (strain 34H / ATCC BAA-681) (Vibrio psychroerythus) protein is 3-methyl-2-oxobutanoate hydroxymethyltransferase.